The following is a 119-amino-acid chain: Large ribosomal subunit protein bL20 (119 aa).

Belongs to the bacterial ribosomal protein bL20 family.

Its function is as follows. Binds directly to 23S ribosomal RNA and is necessary for the in vitro assembly process of the 50S ribosomal subunit. It is not involved in the protein synthesizing functions of that subunit. The sequence is that of Large ribosomal subunit protein bL20 from Streptococcus thermophilus (strain ATCC BAA-491 / LMD-9).